The following is an 883-amino-acid chain: Alanine--tRNA ligase (883 aa).

Residues histidine 562, histidine 566, cysteine 664, and histidine 668 each contribute to the Zn(2+) site.

This sequence belongs to the class-II aminoacyl-tRNA synthetase family. In terms of assembly, homotetramer. It depends on Zn(2+) as a cofactor.

It is found in the cytoplasm. The enzyme catalyses tRNA(Ala) + L-alanine + ATP = L-alanyl-tRNA(Ala) + AMP + diphosphate. Its function is as follows. Catalyzes the attachment of alanine to tRNA(Ala) in a two-step reaction: alanine is first activated by ATP to form Ala-AMP and then transferred to the acceptor end of tRNA(Ala). Also edits incorrectly charged Ser-tRNA(Ala) and Gly-tRNA(Ala) via its editing domain. The polypeptide is Alanine--tRNA ligase (Buchnera aphidicola subsp. Schizaphis graminum (strain Sg)).